The sequence spans 483 residues: Glutamyl-tRNA(Gln) amidotransferase subunit A (483 aa).

Residues Lys75 and Ser150 each act as charge relay system in the active site. The Acyl-ester intermediate role is filled by Ser174.

This sequence belongs to the amidase family. GatA subfamily. In terms of assembly, heterotrimer of A, B and C subunits.

It catalyses the reaction L-glutamyl-tRNA(Gln) + L-glutamine + ATP + H2O = L-glutaminyl-tRNA(Gln) + L-glutamate + ADP + phosphate + H(+). Functionally, allows the formation of correctly charged Gln-tRNA(Gln) through the transamidation of misacylated Glu-tRNA(Gln) in organisms which lack glutaminyl-tRNA synthetase. The reaction takes place in the presence of glutamine and ATP through an activated gamma-phospho-Glu-tRNA(Gln). This chain is Glutamyl-tRNA(Gln) amidotransferase subunit A, found in Deinococcus geothermalis (strain DSM 11300 / CIP 105573 / AG-3a).